The primary structure comprises 268 residues: Ribosomal RNA small subunit methyltransferase A (268 aa).

S-adenosyl-L-methionine-binding residues include asparagine 21, leucine 23, glycine 48, glutamate 69, aspartate 94, and asparagine 115.

It belongs to the class I-like SAM-binding methyltransferase superfamily. rRNA adenine N(6)-methyltransferase family. RsmA subfamily.

It localises to the cytoplasm. It catalyses the reaction adenosine(1518)/adenosine(1519) in 16S rRNA + 4 S-adenosyl-L-methionine = N(6)-dimethyladenosine(1518)/N(6)-dimethyladenosine(1519) in 16S rRNA + 4 S-adenosyl-L-homocysteine + 4 H(+). In terms of biological role, specifically dimethylates two adjacent adenosines (A1518 and A1519) in the loop of a conserved hairpin near the 3'-end of 16S rRNA in the 30S particle. May play a critical role in biogenesis of 30S subunits. This chain is Ribosomal RNA small subunit methyltransferase A, found in Saccharophagus degradans (strain 2-40 / ATCC 43961 / DSM 17024).